The sequence spans 297 residues: Phosphoribosylaminoimidazole-succinocarboxamide synthase (297 aa).

Belongs to the SAICAR synthetase family.

It catalyses the reaction 5-amino-1-(5-phospho-D-ribosyl)imidazole-4-carboxylate + L-aspartate + ATP = (2S)-2-[5-amino-1-(5-phospho-beta-D-ribosyl)imidazole-4-carboxamido]succinate + ADP + phosphate + 2 H(+). It functions in the pathway purine metabolism; IMP biosynthesis via de novo pathway; 5-amino-1-(5-phospho-D-ribosyl)imidazole-4-carboxamide from 5-amino-1-(5-phospho-D-ribosyl)imidazole-4-carboxylate: step 1/2. The polypeptide is Phosphoribosylaminoimidazole-succinocarboxamide synthase (Mycobacterium sp. (strain JLS)).